The primary structure comprises 669 residues: Soluble guanylate cyclase 89Db (669 aa).

A heme-binding site is contributed by H104. Residues 430–458 (QHCSKLEIMFEKEEQRSDELEKSLELADS) are a coiled coil. The Guanylate cyclase domain maps to 494 to 620 (SVIFIEVMNI…DTVNTASRME (127 aa)).

It belongs to the adenylyl cyclase class-4/guanylyl cyclase family. Heterodimer; with Gyc88E, in the presence of magnesium or manganese. The cofactor is heme. As to expression, expressed in embryos in a segmental pattern in the ventral nerve cord (VNC) and in the brain, beginning at stage 13 and continuing through to stage 17. Colocalized with Gyc-89Db in several peripheral neurons that innervate trachea, basiconical sensilla and the sensory cones in the posterior segments of the embryo. Expression in wandering 3rd instar larvae is most prominent in a small cluster of cells located in the anterior medial region of each brain lobe. In the VNC, expression is found in scattered cells both laterally and at the midline.

The protein localises to the cytoplasm. It carries out the reaction GTP = 3',5'-cyclic GMP + diphosphate. Probably not activated by nitric oxide (NO). Heterodimer exhibits some stimulation, compounds (SIN-1 and two of the NONOates) that were ineffective at stimulating Gyc-88E homodimer did stimulate the heterodimer. Its function is as follows. Heterodimers with Gyc88E are activated in response to changing oxygen concentrations, alerting flies to hypoxic environments. Under normal oxygen concentrations, oxygen binds to the heme group and results in low levels of guanylyl cyclase activity. When exposed to reduced oxygen concentrations, the oxygen dissociates from the heme group resulting in activation of the enzyme. This is Soluble guanylate cyclase 89Db from Drosophila melanogaster (Fruit fly).